The primary structure comprises 1593 residues: Nischarin (1593 aa).

A necessary for binding to phosphoinositide-3-P; not sufficient for targeting to endosomes region spans residues 1-134 (MAAATLSFGP…GVTAALAEEL (134 aa)). Positions 12-122 (REAEPAKEAR…AHFLHFHLYE (111 aa)) constitute a PX domain. Residues 121-695 (YEVNGVTAAL…ERLALEWALG (575 aa)) are necessary for homooligomerization and targeting to endosomes. Residues 246 to 869 (MSVRFSATSM…LVYSDKRMVQ (624 aa)) are interaction with PAK1. 6 LRR repeats span residues 290–311 (ALTT…VKLI), 313–334 (KIEY…QHLY), 335–356 (NLVH…HTKL), 358–379 (NVKT…HKLY), 380–401 (SLVN…KSIG), and 405–426 (CLER…RTKV). Over residues 466–480 (SKLSNTEKKAGEDFR) the composition is skewed to basic and acidic residues. A disordered region spans residues 466 to 499 (SKLSNTEKKAGEDFRLPPAPCIRPGGSPPAAPAS). The segment covering 482–496 (PPAPCIRPGGSPPAA) has biased composition (pro residues). Phosphoserine occurs at positions 543, 545, and 548. The stretch at 624 to 694 (IEAANQREEA…EERLALEWAL (71 aa)) forms a coiled coil. Residues 629-687 (QREEAHGEQGEEEEEEEEEEDVAENRYFEMGPPDAEEEEGSGQGEEDEEDEDEEAEEER) form a disordered region. Composition is skewed to acidic residues over residues 638–650 (GEEE…EEDV) and 662–685 (DAEE…EAEE). The segment at 661-869 (PDAEEEEGSG…LVYSDKRMVQ (209 aa)) is interaction with LIMK. The segment at 709–807 (KVLWCFLIHV…ANLHEFHADL (99 aa)) is interaction with ITGA5. Residues 1016 to 1185 (NPSAKPRNQP…PAGGPAPAEA (170 aa)) form a disordered region. Low complexity-rich tracts occupy residues 1038–1069 (ETPA…LAPV) and 1081–1158 (AEAP…APAP). 10 consecutive repeat copies span residues 1081–1086 (AEAPAA), 1087–1092 (AEAPAA), 1093–1098 (AEAPAA), 1099–1104 (AEAPAA), 1105–1110 (AEAPAA), 1111–1116 (AEAPAA), 1123–1128 (AEAPAA), 1129–1134 (AEAPAA), 1135–1140 (AEAPAA), and 1141–1146 (AEAPAA). The 10 X 6 AA tandem repeat of A-E-A-P-A-A stretch occupies residues 1081–1146 (AEAPAAAEAP…APAAAEAPAA (66 aa)). The span at 1159 to 1179 (NQAPAPARGPAPARGPAPAGG) shows a compositional bias: pro residues. T1371 carries the post-translational modification Phosphothreonine. S1373 bears the Phosphoserine mark.

Homooligomer. Interacts with GRB2. Interacts with PIK3R1; probably associates with the PI3-kinase complex. Interacts with IRS4. Found in a complex with ITGA5 and PAK1. Found in a complex with LIMK1 and PAK1. Interacts with ITGA5 (via cytoplasmic domain); this interaction is direct. Interacts with PAK1 (via kinase domain); this interaction is direct and is increased upon activation of PAK1. Interacts with LIMK1 (via PDZ and kinase domain); this interaction is direct. Interacts with LIMK2; this interaction depends on LIMK2 activity. Interacts with RAC1 (activated state). Interacts with STK11; this interaction may increase STK11 activity. Highly expressed in brain and kidney. Moderately expressed in heart, liver, lung and skeletal muscle. Not detected in spleen and testis.

It is found in the cell membrane. Its subcellular location is the cytoplasm. The protein localises to the early endosome. The protein resides in the recycling endosome. Functionally, acts either as the functional imidazoline-1 receptor (I1R) candidate or as a membrane-associated mediator of the I1R signaling. Binds numerous imidazoline ligands that induces initiation of cell-signaling cascades triggering to cell survival, growth and migration. Its activation by the agonist rilmenidine induces an increase in phosphorylation of mitogen-activated protein kinases MAPK1 and MAPK3 in rostral ventrolateral medulla (RVLM) neurons that exhibited rilmenidine-evoked hypotension. Blocking its activation with efaroxan abolished rilmenidine-induced mitogen-activated protein kinase phosphorylation in RVLM neurons. Acts as a modulator of Rac-regulated signal transduction pathways. Suppresses Rac1-stimulated cell migration by interacting with PAK1 and inhibiting its kinase activity. Also blocks Pak-independent Rac signaling by interacting with RAC1 and inhibiting Rac1-stimulated NF-kB response element and cyclin D1 promoter activation. Also inhibits LIMK1 kinase activity by reducing LIMK1 'Tyr-508' phosphorylation. Inhibits Rac-induced cell migration and invasion in breast and colon epithelial cells. Inhibits lamellipodia formation, when overexpressed. Plays a role in protection against apoptosis. Involved in association with IRS4 in the enhancement of insulin activation of MAPK1 and MAPK3. When overexpressed, induces a redistribution of cell surface ITGA5 integrin to intracellular endosomal structures. This Mus musculus (Mouse) protein is Nischarin (Nisch).